A 182-amino-acid chain; its full sequence is ATP-dependent protease subunit HslV (182 aa).

Threonine 10 is a catalytic residue. The Na(+) site is built by alanine 164, cysteine 167, and threonine 170.

This sequence belongs to the peptidase T1B family. HslV subfamily. As to quaternary structure, a double ring-shaped homohexamer of HslV is capped on each side by a ring-shaped HslU homohexamer. The assembly of the HslU/HslV complex is dependent on binding of ATP.

The protein localises to the cytoplasm. It catalyses the reaction ATP-dependent cleavage of peptide bonds with broad specificity.. Its activity is regulated as follows. Allosterically activated by HslU binding. In terms of biological role, protease subunit of a proteasome-like degradation complex believed to be a general protein degrading machinery. The sequence is that of ATP-dependent protease subunit HslV from Chelativorans sp. (strain BNC1).